We begin with the raw amino-acid sequence, 126 residues long: MNEKARLLRIRARLKRKKPRFLRQEWWRYPKFKNDPKWRRPKGIDSKMRLKKKGKARSPSIGWSSPRLVRGLHPSGYEEVLVHNVKELEAIDPARQAARIARTVGARKREMILARAKELGVKVLNP.

It belongs to the eukaryotic ribosomal protein eL32 family.

This is Large ribosomal subunit protein eL32 from Thermococcus onnurineus (strain NA1).